Consider the following 172-residue polypeptide: LOB domain-containing protein 4 (172 aa).

Residues 12–113 (SPCAACKLLR…AQLALAQAEV (102 aa)) enclose the LOB domain. The interval 125–152 (PGHGLCPDSPSSSGSPSSKQVSPQDNKG) is disordered. Residues 131 to 147 (PDSPSSSGSPSSKQVSP) are compositionally biased toward low complexity.

Belongs to the LOB domain-containing protein family. Expressed in young shoots, roots, stems, leaves and flowers.

This chain is LOB domain-containing protein 4 (LBD4), found in Arabidopsis thaliana (Mouse-ear cress).